A 904-amino-acid polypeptide reads, in one-letter code: Envelope glycoprotein B (904 aa).

The first 22 residues, 1–22 (MRGGGLICALVVGALVAAVASA), serve as a signal peptide directing secretion. Residues 23–771 (APAAPAAPRA…SGVSSFMSNP (749 aa)) are Virion surface-facing. The disordered stretch occupies residues 40-83 (VAANGGPASRPPPVPSPATTKARKRKTKKPPKRPEATPPPDANA). Basic residues predominate over residues 60–70 (KARKRKTKKPP). 2 N-linked (GlcNAc...) asparagine; by host glycosylation sites follow: asparagine 82 and asparagine 136. Disulfide bonds link cysteine 111–cysteine 570, cysteine 128–cysteine 526, cysteine 202–cysteine 266, cysteine 359–cysteine 407, and cysteine 593–cysteine 630. 2 involved in fusion and/or binding to host membrane regions span residues 168 to 174 (VWFGHRY) and 253 to 260 (RVEAFHRY). Asparagine 393, asparagine 425, and asparagine 486 each carry an N-linked (GlcNAc...) asparagine; by host glycan. The interval 467–490 (QDRKPRNATPAPLREAPSANASVE) is disordered. Asparagine 671 is a glycosylation site (N-linked (GlcNAc...) asparagine; by host). 2 hydrophobic membrane proximal region regions span residues 716–769 (IDTV…SFMS) and 728–768 (MFAG…SSFM). Residues 772–792 (FGALAVGLLVLAGLVAAFFAF) form a helical membrane-spanning segment. The Intravirion portion of the chain corresponds to 793-904 (RYVLQLQRNP…EDEAGDEDEL (112 aa)). The tract at residues 816–835 (TSDPGGVGGEGEEGAEGGGF) is disordered. The Golgi targeting motif lies at 849–852 (YMAL). The tract at residues 883–904 (KRNKARYSPLHNEDEAGDEDEL) is disordered. The Internalization motif motif lies at 889–892 (YSPL).

Belongs to the herpesviridae glycoprotein B family. In terms of assembly, homotrimer; disulfide-linked. Binds to heparan sulfate proteoglycans. Interacts with gH/gL heterodimer.

Its subcellular location is the virion membrane. It localises to the host cell membrane. The protein localises to the host endosome membrane. The protein resides in the host Golgi apparatus membrane. Functionally, envelope glycoprotein that forms spikes at the surface of virion envelope. Essential for the initial attachment to heparan sulfate moieties of the host cell surface proteoglycans. Involved in fusion of viral and cellular membranes leading to virus entry into the host cell. Following initial binding to its host receptors, membrane fusion is mediated by the fusion machinery composed at least of gB and the heterodimer gH/gL. May be involved in the fusion between the virion envelope and the outer nuclear membrane during virion egress. The polypeptide is Envelope glycoprotein B (Homo sapiens (Human)).